The chain runs to 157 residues: Serine-protein kinase RsbW (157 aa).

The protein belongs to the anti-sigma-factor family.

It carries out the reaction L-seryl-[protein] + ATP = O-phospho-L-seryl-[protein] + ADP + H(+). It catalyses the reaction L-threonyl-[protein] + ATP = O-phospho-L-threonyl-[protein] + ADP + H(+). In terms of biological role, negative regulator of sigma-B activity. Phosphorylates and inactivates its specific antagonist protein, RsbV. Upon phosphorylation of RsbV, RsbW is released and binds to sigma-B, thereby blocking its ability to form an RNA polymerase holoenzyme (E-sigma-B). This chain is Serine-protein kinase RsbW, found in Listeria monocytogenes serotype 4b (strain CLIP80459).